Consider the following 188-residue polypeptide: Elongation factor P (188 aa).

K34 bears the N6-(3,6-diaminohexanoyl)-5-hydroxylysine mark.

The protein belongs to the elongation factor P family. In terms of processing, may be beta-lysylated on the epsilon-amino group of Lys-34 by the combined action of EpmA and EpmB, and then hydroxylated on the C5 position of the same residue by EpmC (if this protein is present). Lysylation is critical for the stimulatory effect of EF-P on peptide-bond formation. The lysylation moiety may extend toward the peptidyltransferase center and stabilize the terminal 3-CCA end of the tRNA. Hydroxylation of the C5 position on Lys-34 may allow additional potential stabilizing hydrogen-bond interactions with the P-tRNA.

The protein resides in the cytoplasm. It participates in protein biosynthesis; polypeptide chain elongation. In terms of biological role, involved in peptide bond synthesis. Alleviates ribosome stalling that occurs when 3 or more consecutive Pro residues or the sequence PPG is present in a protein, possibly by augmenting the peptidyl transferase activity of the ribosome. Modification of Lys-34 is required for alleviation. The chain is Elongation factor P from Vibrio cholerae serotype O1 (strain ATCC 39541 / Classical Ogawa 395 / O395).